A 570-amino-acid polypeptide reads, in one-letter code: Glycine--tRNA ligase (570 aa).

2 residues coordinate substrate: Arg99 and Glu165. ATP-binding positions include 197–199, 207–212, 324–325, and 443–446; these read RNE, LRLREF, EC, and GIDR. 212-216 contacts substrate; that stretch reads FTQAE. 439–443 contributes to the substrate binding site; the sequence is EPSFG.

Belongs to the class-II aminoacyl-tRNA synthetase family.

The protein resides in the cytoplasm. The catalysed reaction is tRNA(Gly) + glycine + ATP = glycyl-tRNA(Gly) + AMP + diphosphate. In terms of biological role, catalyzes the attachment of glycine to tRNA(Gly). This chain is Glycine--tRNA ligase, found in Thermococcus gammatolerans (strain DSM 15229 / JCM 11827 / EJ3).